The sequence spans 320 residues: Histidine decarboxylase proenzyme (320 aa).

The propeptide occupies 2 to 11 (NKNLEANRNR). Ser98 is subject to Pyruvic acid (Ser). Glu215 functions as the Proton donor in the catalytic mechanism.

In terms of assembly, the proenzyme is a hexamer of identical pi chains; each pi chain monomer is cleaved to form a small (or beta) chain and a large (or alpha) chain by non-hydrolytic self-catalysis. Requires pyruvate as cofactor.

The enzyme catalyses L-histidine + H(+) = histamine + CO2. The protein is Histidine decarboxylase proenzyme (hdc) of Clostridium perfringens (strain 13 / Type A).